Reading from the N-terminus, the 420-residue chain is Protein STB1 (420 aa).

Position 2 is an N-acetylserine (Ser2). The interaction with SWI6 stretch occupies residues 2–70; that stretch reads SQPQMSPEKE…DEDHKTLLEA (69 aa). Ser7 bears the Phosphoserine mark. Disordered regions lie at residues 30 to 187 and 273 to 319; these read QLKL…SDNT and DSPS…ELNG. Residues 43–55 are compositionally biased toward basic and acidic residues; the sequence is RKQDSTTKKRSGE. A Phosphoserine modification is found at Ser72. Phosphothreonine is present on Thr99. Ser102 carries the phosphoserine modification. Over residues 106-122 the composition is skewed to basic and acidic residues; it reads RKAEDRSQQIKPRKEDT. Over residues 156–169 the composition is skewed to low complexity; it reads NNNNSSNHSNNNNN. The segment covering 277–319 has biased composition (polar residues); that stretch reads LYLSNNNGSVQATLSPQQRRKPTTNTLHPPSNVPTTPSRELNG. Position 419 is a phosphothreonine (Thr419).

As to quaternary structure, interacts with the ANK repeats of SWI6. The interaction with SWI6 is required for function. Interacts with SIN3. Post-translationally, phosphorylated by CDC28 in a cell cycle-dependent manner, inhibiting the interaction with SWI6.

The protein localises to the cytoplasm. It is found in the nucleus. In terms of biological role, involved in the regulation and timing of MBF-dependent transcription in late G1 of the cell cycle. This chain is Protein STB1 (STB1), found in Saccharomyces cerevisiae (strain ATCC 204508 / S288c) (Baker's yeast).